The following is a 401-amino-acid chain: MVVSVKVFKKATPNGKVTFYLGRRHFIDHFDYIDPVDGVIVVDPDYLKNRKVFAQLATIYRYGREEDEVMGVKFSKELILCREQIVPMGNSNMEMTPTQEKLVRKLGSNAHPFTFHFPPNSPSSVTLQQEGDDLGKPLGVEYTIRAYVADSEDDRQHKRSMVSLVIKKLQYAPPTRGQRLPSSLVSKGFTFSNGKISLEVTLDREIYYHGGKVAATVQINNNSKKAVKNIKVFIIQHTEITMVNAQFSKHVAQLETKEGCPITPGANLSKTFYLIPLASNNKDRHGIALDGHLKDEDVNLASSTMVQDGKSTGDACGIVISYSVRIKLNCGTLGGEIQTDVPFKLLQPAPGSVEKKRSNAMKKMKSIEQHRNTKGYYQDDDDNIVFEDFAKMRNNNADVMD.

The protein belongs to the arrestin family.

Directly interacts with light-activated rhodopsin thereby activating the phosphorylation of metarhodopsin. Inhibits the dephosphorylation of metarhodopsin. In Calliphora vicina (Blue blowfly), this protein is Phosrestin-1 (ARR2).